The sequence spans 414 residues: MVSTFSRKDQNYKNDDLNQPSIEGRFGKYGGQYVPETLMPALFELEDAASNAWKDKLFVEELNHLLKTYVGRETPLYEAKRLTEHYKNKQATPRIWLKREDLNHTGAHKINNALGQALLAIRMGKKRIIAETGAGQHGVATATVCARFGLKCIIYMGAEDIKRQSLNVFRMKLLGAEVKVVNSGTATLKDATSEAIRDWVSNVETTHYILGSVAGPHPFPKIVRDFHAVIGEETKKQCLESFGSLPDILLACVGGGSNAMGLFHPFVKETSVRLIGVEAAGSGVDTDKHAATITKGSVGILHGSMSLLLQDDNGQVQEAHSISAGLDYPGVGPEHSHLKDIGRAEYGSVTDQEALDALKLVSELEGIIPALETAHAFAWLDKLCPTLEKDTNIVINCSGRGDKDVNTVASSLDI.

Lys109 bears the N6-(pyridoxal phosphate)lysine mark.

This sequence belongs to the TrpB family. As to quaternary structure, tetramer of two alpha and two beta chains. It depends on pyridoxal 5'-phosphate as a cofactor.

It carries out the reaction (1S,2R)-1-C-(indol-3-yl)glycerol 3-phosphate + L-serine = D-glyceraldehyde 3-phosphate + L-tryptophan + H2O. The protein operates within amino-acid biosynthesis; L-tryptophan biosynthesis; L-tryptophan from chorismate: step 5/5. Its function is as follows. The beta subunit is responsible for the synthesis of L-tryptophan from indole and L-serine. The chain is Tryptophan synthase beta chain from Prochlorococcus marinus (strain AS9601).